The sequence spans 265 residues: WUSCHEL-related homeobox 3B (265 aa).

The homeobox; WUS-type DNA-binding region spans 4 to 68; it reads TPSTRWCPTP…NHKARERQRL (65 aa). Disordered stretches follow at residues 77–107 and 242–265; these read QQQY…APPA and PTKS…TSTN. The segment covering 254-265 has biased composition (low complexity); it reads SSKSSSCSTSTN.

This sequence belongs to the WUS homeobox family. In terms of tissue distribution, predominantly expressed in tissues enriched for shoot meristems and young lateral organ primordia. First expressed in lateral domains of shoot meristems. It is then expressed in the margins of young lateral organ primordia. Not expressed in roots, seedling leaves or fully expanded coleoptiles. Also expressed in vegetative shoot apices (five leaf primordia and the SAM) and in the male inflorescence. Expressed at high level in the female inflorescence.

It is found in the nucleus. Functionally, probable transcription factor required to initiate organ founder cells in a lateral domain of shoot meristems. Involved in leaf formation. The sequence is that of WUSCHEL-related homeobox 3B (WOX3B) from Zea mays (Maize).